A 227-amino-acid chain; its full sequence is Protein GrpE (227 aa).

Residues 1-18 show a composition bias toward polar residues; it reads MTQGNQKTEGNPPEQVTV. 2 disordered regions span residues 1 to 57 and 193 to 227; these read MTQG…GAAT and TEEGDGEAAATDEPTAAAAETRPPESDDNAGASGD. Basic and acidic residues predominate over residues 19–35; that stretch reads TDKRRIDPETGEVRHVP. Low complexity-rich tracts occupy residues 41–50 and 199–213; these read GGTAPQAATA and EAAATDEPTAAAAET.

This sequence belongs to the GrpE family. In terms of assembly, homodimer.

The protein resides in the cytoplasm. Participates actively in the response to hyperosmotic and heat shock by preventing the aggregation of stress-denatured proteins, in association with DnaK and GrpE. It is the nucleotide exchange factor for DnaK and may function as a thermosensor. Unfolded proteins bind initially to DnaJ; upon interaction with the DnaJ-bound protein, DnaK hydrolyzes its bound ATP, resulting in the formation of a stable complex. GrpE releases ADP from DnaK; ATP binding to DnaK triggers the release of the substrate protein, thus completing the reaction cycle. Several rounds of ATP-dependent interactions between DnaJ, DnaK and GrpE are required for fully efficient folding. The chain is Protein GrpE from Mycolicibacterium paratuberculosis (strain ATCC BAA-968 / K-10) (Mycobacterium paratuberculosis).